A 191-amino-acid polypeptide reads, in one-letter code: TATA-box-binding protein (191 aa).

2 tandem repeats follow at residues 18–94 (LQNV…AKIV) and 108–185 (IQNI…YPVL).

The protein belongs to the TBP family. Belongs to the TFIID complex together with the TBP-associated factors (TAFs). Binds DNA as monomer.

The protein localises to the nucleus. General transcription factor that functions at the core of the DNA-binding multiprotein factor TFIID. Binding of TFIID to the TATA box is the initial transcriptional step of the pre-initiation complex (PIC), playing a role in the activation of eukaryotic genes transcribed by RNA polymerase II. In Acetabularia peniculus (Green alga), this protein is TATA-box-binding protein.